We begin with the raw amino-acid sequence, 171 residues long: MKLILIKPVKKLGKIMDIVDVANGFGRNYLLPRNYAIRATNANLEIVKSTVQQLNEKNQKGIDAAQAVMQKIDRSFITFICQTSDDGKLFGSITAKEIIKKLQISSDIKAYIDIKPIKTAGIHEVEVSLHAEVHCKIFINVARSNTEAQEYLKKFNAALQNTNNNVLVEKN.

The protein belongs to the bacterial ribosomal protein bL9 family.

Binds to the 23S rRNA. The polypeptide is Large ribosomal subunit protein bL9 (Orientia tsutsugamushi (strain Ikeda) (Rickettsia tsutsugamushi)).